We begin with the raw amino-acid sequence, 246 residues long: tRNA pseudouridine synthase A (246 aa).

Residue D53 is the Nucleophile of the active site. A substrate-binding site is contributed by Y112.

This sequence belongs to the tRNA pseudouridine synthase TruA family. In terms of assembly, homodimer.

The catalysed reaction is uridine(38/39/40) in tRNA = pseudouridine(38/39/40) in tRNA. Formation of pseudouridine at positions 38, 39 and 40 in the anticodon stem and loop of transfer RNAs. The protein is tRNA pseudouridine synthase A of Anaplasma phagocytophilum (strain HZ).